A 234-amino-acid polypeptide reads, in one-letter code: Sugar fermentation stimulation protein A (234 aa).

The segment at residues 201–220 (LLSEAQQRGVEILAYKAELS) is a DNA-binding region (H-T-H motif).

This sequence belongs to the SfsA family.

Binds to DNA non-specifically. Could be a regulatory factor involved in maltose metabolism. This is Sugar fermentation stimulation protein A from Escherichia coli O127:H6 (strain E2348/69 / EPEC).